The sequence spans 175 residues: Large ribosomal subunit protein uL10 (175 aa).

It belongs to the universal ribosomal protein uL10 family. In terms of assembly, part of the ribosomal stalk of the 50S ribosomal subunit. The N-terminus interacts with L11 and the large rRNA to form the base of the stalk. The C-terminus forms an elongated spine to which L12 dimers bind in a sequential fashion forming a multimeric L10(L12)X complex.

Its function is as follows. Forms part of the ribosomal stalk, playing a central role in the interaction of the ribosome with GTP-bound translation factors. This Methylococcus capsulatus (strain ATCC 33009 / NCIMB 11132 / Bath) protein is Large ribosomal subunit protein uL10.